The sequence spans 197 residues: Phosphoheptose isomerase (197 aa).

The 163-residue stretch at 34-196 (MVQCLLGGNK…DRTLFPQDEQ (163 aa)) folds into the SIS domain. 49–51 (NGG) contributes to the substrate binding site. 2 residues coordinate Zn(2+): H58 and E62. Substrate-binding positions include E62, 91–92 (ND), 117–119 (STS), S122, and Q172. Positions 172 and 180 each coordinate Zn(2+).

The protein belongs to the SIS family. GmhA subfamily. Homotetramer. The cofactor is Zn(2+).

Its subcellular location is the cytoplasm. It catalyses the reaction 2 D-sedoheptulose 7-phosphate = D-glycero-alpha-D-manno-heptose 7-phosphate + D-glycero-beta-D-manno-heptose 7-phosphate. It participates in carbohydrate biosynthesis; D-glycero-D-manno-heptose 7-phosphate biosynthesis; D-glycero-alpha-D-manno-heptose 7-phosphate and D-glycero-beta-D-manno-heptose 7-phosphate from sedoheptulose 7-phosphate: step 1/1. Catalyzes the isomerization of sedoheptulose 7-phosphate in D-glycero-D-manno-heptose 7-phosphate. The protein is Phosphoheptose isomerase of Shewanella piezotolerans (strain WP3 / JCM 13877).